Here is a 96-residue protein sequence, read N- to C-terminus: Small ribosomal subunit protein uS19 (96 aa).

The segment at 1-30 is disordered; it reads MARSIKKGPFADKHLTKKVEDANKGNKKSV. Residues 9–24 are compositionally biased toward basic and acidic residues; sequence PFADKHLTKKVEDANK.

Belongs to the universal ribosomal protein uS19 family.

Functionally, protein S19 forms a complex with S13 that binds strongly to the 16S ribosomal RNA. This chain is Small ribosomal subunit protein uS19, found in Anaeromyxobacter sp. (strain Fw109-5).